Here is a 172-residue protein sequence, read N- to C-terminus: Small ribosomal subunit protein uS5 (172 aa).

The S5 DRBM domain occupies 17 to 80 (LKEKMIAVNR…EEARRNMTKV (64 aa)).

The protein belongs to the universal ribosomal protein uS5 family. In terms of assembly, part of the 30S ribosomal subunit. Contacts proteins S4 and S8.

Functionally, with S4 and S12 plays an important role in translational accuracy. Located at the back of the 30S subunit body where it stabilizes the conformation of the head with respect to the body. The chain is Small ribosomal subunit protein uS5 from Polaromonas sp. (strain JS666 / ATCC BAA-500).